The chain runs to 695 residues: Calcium-binding acidic-repeat protein (695 aa).

Positions 1–20 form a signal peptide, or 23; the sequence is MSHLWCWLFLVLCLACLVLS. TSP type-3 repeat units lie at residues 24-38, 47-56, 70-82, 184-196, 202-214, and 248-260; these read KDSDGDGLLDVDEIN, ADSDQDGLTD, KDTDDDSIGDGVE, GDSDDDGVSDGAE, KDSDGDGLTDEEE, and GDSDDDGLGDGAE. The tract at residues 45 to 695 is disordered; sequence YNADSDQDGL…TDPWRSDHSV (651 aa). Basic and acidic residues predominate over residues 59-70; it reads EVNRHQTHPQDK. Composition is skewed to acidic residues over residues 271-283, 291-306, and 313-324; these read ADSDNDGLDDGEE, PEDPDSDNDGLNDGDE, and DPEEDDSDEDGV. TSP type-3 repeat units lie at residues 294–308, 317–329, 340–352, 363–375, 379–393, 402–414, 425–437, 470–482, 493–505, 516–528, 539–551, 555–569, 600–609, 623–635, and 646–658; these read PDSDNDGLNDGDEVN, DDSDEDGVCDGAE, EDSDNDGIPDGAE, EDSDDDGIADGAE, TDSDGDGLPDEDEVA, ADSDYDGLTDGAE, KDTDDDGLGDGVE, EDTDDDGLTDGAE, ADTDDDGLTDGAE, ADSDGDGLSDGAE, GDSDDDGVPDAAE, KDSDGDGLSDTDEVR, RDTDGDGVAD, and ADSDDDGLSDGAE. 2 stretches are compositionally biased toward acidic residues: residues 361-370 and 381-392; these read NDEDSDDDGI and SDGDGLPDEDEV. Composition is skewed to acidic residues over residues 467–477 and 491–500; these read PNDEDTDDDGL and EDADTDDDGL. Residues 537–546 are compositionally biased toward acidic residues; sequence NDGDSDDDGV. Over residues 589–603 the composition is skewed to basic and acidic residues; it reads EILKHKTDPRNRDTD. Over residues 665–679 the composition is skewed to basic and acidic residues; sequence NAKDGDSDDDGKADG.

It is found in the secreted. It localises to the endoplasmic reticulum. Functionally, may function as a calcium-binding protein. The protein is Calcium-binding acidic-repeat protein of Euglena gracilis.